Reading from the N-terminus, the 187-residue chain is GTP cyclohydrolase 1 (187 aa).

Zn(2+) contacts are provided by cysteine 76, histidine 79, and cysteine 148.

This sequence belongs to the GTP cyclohydrolase I family. Homomer.

It carries out the reaction GTP + H2O = 7,8-dihydroneopterin 3'-triphosphate + formate + H(+). Its pathway is cofactor biosynthesis; 7,8-dihydroneopterin triphosphate biosynthesis; 7,8-dihydroneopterin triphosphate from GTP: step 1/1. This Desulforamulus reducens (strain ATCC BAA-1160 / DSM 100696 / MI-1) (Desulfotomaculum reducens) protein is GTP cyclohydrolase 1.